A 193-amino-acid chain; its full sequence is Xanthine phosphoribosyltransferase (193 aa).

The xanthine site is built by L20 and N27. 128-132 (ANGEA) is a 5-phospho-alpha-D-ribose 1-diphosphate binding site. K156 contributes to the xanthine binding site.

This sequence belongs to the purine/pyrimidine phosphoribosyltransferase family. Xpt subfamily. Homodimer.

It is found in the cytoplasm. The catalysed reaction is XMP + diphosphate = xanthine + 5-phospho-alpha-D-ribose 1-diphosphate. It participates in purine metabolism; XMP biosynthesis via salvage pathway; XMP from xanthine: step 1/1. Its function is as follows. Converts the preformed base xanthine, a product of nucleic acid breakdown, to xanthosine 5'-monophosphate (XMP), so it can be reused for RNA or DNA synthesis. This is Xanthine phosphoribosyltransferase from Exiguobacterium sp. (strain ATCC BAA-1283 / AT1b).